The chain runs to 319 residues: Probable secreted beta-glucosidase C2G2.17c (319 aa).

The N-terminal stretch at 1 to 19 is a signal peptide; the sequence is MLFNNFLCFAVSAIPLVSA. Residues N36, N39, N45, N48, and N221 are each glycosylated (N-linked (GlcNAc...) asparagine).

This sequence belongs to the SUN family.

It is found in the secreted. Cell surface beta-glucosidase involved in cell wall biogenesis. The polypeptide is Probable secreted beta-glucosidase C2G2.17c (Schizosaccharomyces pombe (strain 972 / ATCC 24843) (Fission yeast)).